Consider the following 228-residue polypeptide: Ribosomal RNA small subunit methyltransferase G (228 aa).

S-adenosyl-L-methionine is bound by residues G89, L94, V140–E141, and R159.

Belongs to the methyltransferase superfamily. RNA methyltransferase RsmG family.

It localises to the cytoplasm. The catalysed reaction is guanosine(527) in 16S rRNA + S-adenosyl-L-methionine = N(7)-methylguanosine(527) in 16S rRNA + S-adenosyl-L-homocysteine. Its function is as follows. Specifically methylates the N7 position of guanine in position 527 of 16S rRNA. The sequence is that of Ribosomal RNA small subunit methyltransferase G from Burkholderia lata (strain ATCC 17760 / DSM 23089 / LMG 22485 / NCIMB 9086 / R18194 / 383).